Here is a 293-residue protein sequence, read N- to C-terminus: 4-hydroxy-tetrahydrodipicolinate synthase (293 aa).

Thr44 is a binding site for pyruvate. Tyr132 functions as the Proton donor/acceptor in the catalytic mechanism. Lys161 serves as the catalytic Schiff-base intermediate with substrate. Ile205 contributes to the pyruvate binding site.

Belongs to the DapA family. In terms of assembly, homotetramer; dimer of dimers.

Its subcellular location is the cytoplasm. It carries out the reaction L-aspartate 4-semialdehyde + pyruvate = (2S,4S)-4-hydroxy-2,3,4,5-tetrahydrodipicolinate + H2O + H(+). Its pathway is amino-acid biosynthesis; L-lysine biosynthesis via DAP pathway; (S)-tetrahydrodipicolinate from L-aspartate: step 3/4. Its function is as follows. Catalyzes the condensation of (S)-aspartate-beta-semialdehyde [(S)-ASA] and pyruvate to 4-hydroxy-tetrahydrodipicolinate (HTPA). This is 4-hydroxy-tetrahydrodipicolinate synthase from Thermosipho africanus (strain TCF52B).